The primary structure comprises 348 residues: Uroporphyrinogen decarboxylase (348 aa).

Substrate is bound by residues 23 to 27 (RQAGR), D72, Y148, S203, and H316.

This sequence belongs to the uroporphyrinogen decarboxylase family. Homodimer.

The protein resides in the cytoplasm. The enzyme catalyses uroporphyrinogen III + 4 H(+) = coproporphyrinogen III + 4 CO2. Its pathway is porphyrin-containing compound metabolism; protoporphyrin-IX biosynthesis; coproporphyrinogen-III from 5-aminolevulinate: step 4/4. In terms of biological role, catalyzes the decarboxylation of four acetate groups of uroporphyrinogen-III to yield coproporphyrinogen-III. This chain is Uroporphyrinogen decarboxylase, found in Myxococcus xanthus (strain DK1622).